Consider the following 234-residue polypeptide: Polycomb group RING finger protein 5-A (234 aa).

The segment at 18–57 (CSICRGYLIKPTAVTECLHTFCKSCIVQHFEESNECPECG) adopts an RING-type zinc-finger fold. A disordered region spans residues 97–130 (FWRKHKIKSNGEDGPRAKKSRLSGEDDDGNGGDY).

In terms of assembly, component of a PRC1-like complex.

The protein localises to the nucleus. Functionally, component of Polycomb group (PcG) multiprotein complexes; the complex class is required to maintain the transcriptionally repressive state of some genes. The protein is Polycomb group RING finger protein 5-A of Danio rerio (Zebrafish).